The chain runs to 1264 residues: MSSQNNNKQGGQDINNKKDSDDIKPSVSKEDLINSLKNDELNKNTTMDQNDMKKNENMNIKKNEVLNNSNNVEDGDNENSKFMNKSKEGLNNINGEKNDDNNSIVKVEESPKSIGYNYYASESIENLCKEFGLESINTGLNSEQVKINRDKYGENFIEKDEVVPVWLIFLSQYCSPVVLLLLVAAVASLALNEVVEGVAIISIVTLNACLATYMEKSSGDAIGKLAEMASPQCTVLRNGQKVVIPSREVVVGDVVLINTGDSISADLRLFDVIELKTNESLLTGESEDIKKTIVADNLSTPFATNLCFATTSVTSGSGKGIVISTGLDTQVGKIASQLKKSSKGSKLTPLQVALNKLGGLIGLIAIIVLVVIISLAVIIKYRDPAHADKDPTFVIIIIGVGFAVSSIPEGLPMVVTITLSAGAKDMVKKNANVRKLPAVETLGCCSVICSDKTGTLTEGKMTAINAVTICKNSSLSDENNKLTKTFDFYPTKGFEPCGGLFDSNELTSEKKKEIVIAKNQNTSYDKVLYNYGNPSNKSVIVDKTRSLMFAAYLNSYDTTLSRDPKTLKWGIHGNMSEGPIVVAAAKVGYSFINNPNHKSYLDNFQRLDDLEVTFNSSRKMKITFYKLKTVNVFENVYLDKPGKVYTHVALIKGAPDRLLDRSTHLLEETSMKKVQVSWNSTITQEERNVLIKKNLELSQKALRVLSICIKPLTDQNIEELKKLEDADERLKYVNYDENGGFIPMGYVASFDPPRPGVKEAIQTCREAQVKVIMITGDQKPTAVAIGKLIGLIEEKSEQVEDINSLAIECSELHINKNPNEPILPNDQLDEFTDKILIYSRAQPEDKITIVQSLKRKGYLVAMTGDGVNDAPALKAADIGVAMGINGTEVAKGASEMILIDDNFCTVVSAIDVGRTIFSNIQKFVCFLLGTNIGEIIYLSVAIVAQMPFPLEALQILFLNLMTDGCPAVALSREPPNDDNMKTPPRPKKQPIMTKRWWFYGILPHTIFEALCVLLSLAFSLYICTGFYNLNGIHNLCKTVNLVDVNDANVYHEYKYFCSSYEYRISTDYVGWVTNVSFWDPQNNEAVNFWGAAKGKVENINPLSDIVHPELRLRMQDGCSGDLTLDENGWCRPKDNKTSDGYNDELEGILKKGFEDVTAKGSKRGRTMAFISAVWCEMLRAYTVRSWEPFYKVFNRNMWMHLACSISATLTFLSTCIPGITSILNTTCLLWWQYLLAIFWALLNLFLDEIVPKVIYRRKYMTIKN.

The segment covering 1–12 (MSSQNNNKQGGQ) has biased composition (polar residues). The tract at residues 1–102 (MSSQNNNKQG…INGEKNDDNN (102 aa)) is disordered. Basic and acidic residues-rich tracts occupy residues 15–42 (NNKKDSDDIKPSVSKEDLINSLKNDELN) and 50–64 (NDMKKNENMNIKKNE). The next 8 helical transmembrane spans lie at 165–185 (VWLIFLSQYCSPVVLLLLVAA), 186–206 (VASLALNEVVEGVAIISIVTL), 359–379 (GLIGLIAIIVLVVIISLAVII), 393–413 (FVIIIIGVGFAVSSIPEGLPM), 923–943 (FVCFLLGTNIGEIIYLSVAIV), 1006–1026 (IFEALCVLLSLAFSLYICTGF), 1203–1223 (CSISATLTFLSTCIPGITSIL), and 1226–1246 (TCLLWWQYLLAIFWALLNLFL).

It belongs to the cation transport ATPase (P-type) (TC 3.A.3) family.

The protein localises to the cell membrane. It catalyses the reaction Na(+)(in) + ATP + H2O = Na(+)(out) + ADP + phosphate + H(+). With respect to regulation, inhibited by cipargamin and other spiroindolone compounds. Inhibited by 4-cyano-3-methylisoquinoline derivatives MB14 and MB10 but not RK18. Inhibited by (+)-SJ733, a dihydroisoquinolone compound. Its function is as follows. Sodium-exporting ATPase. Required for the extrusion of Na(+) from the intraerythrocytic parasites to maintain a low cytosolic concentration of Na(+). In Plasmodium falciparum (isolate 3D7), this protein is P-type sodium-transporting ATPase4.